Consider the following 175-residue polypeptide: Arsenite oxidase subunit AioB (175 aa).

Residues methionine 1–alanine 32 constitute a signal peptide (tat-type signal). The Rieske domain maps to asparagine 62–leucine 158. [2Fe-2S] cluster-binding residues include cysteine 102, histidine 104, cysteine 120, and histidine 123. Cysteine 107 and cysteine 122 are disulfide-bonded.

This sequence belongs to the AOX family. As to quaternary structure, heterodimer consisting of a large and a small subunit. Requires [2Fe-2S] cluster as cofactor. Predicted to be exported by the Tat system. The position of the signal peptide cleavage has not been experimentally proven.

It catalyses the reaction 2 oxidized [azurin] + arsenite + H2O = 2 reduced [azurin] + arsenate + 3 H(+). Functionally, involved in the detoxification of arsenic. Oxidizes As(III)O3(3-) (arsenite) to the somewhat less toxic As(V)O4(3-) (arsenate). The protein is Arsenite oxidase subunit AioB (aioB) of Alcaligenes faecalis.